The following is a 92-amino-acid chain: Small ribosomal subunit protein uS19 (92 aa).

Belongs to the universal ribosomal protein uS19 family.

Its function is as follows. Protein S19 forms a complex with S13 that binds strongly to the 16S ribosomal RNA. This is Small ribosomal subunit protein uS19 from Klebsiella pneumoniae (strain 342).